The sequence spans 412 residues: Double C2-like domain-containing protein beta (412 aa).

The segment at 1–36 (MTLRRRGEKATISIQEHMAIDVCPGPIRPIKQISDY) is negatively regulates targeting to plasma membrane. A mediates interaction with DYNLT1 region spans residues 1-90 (MTLRRRGEKA…EDVDQLFGAY (90 aa)). Positions 38-123 (PRFPRGLPPT…PDVDGYESDD (86 aa)) are disordered. The span at 43–58 (GLPPTAAPRAPAPPDA) shows a compositional bias: pro residues. Over residues 59–74 (PARSPAASASPRSPSD) the composition is skewed to low complexity. Residues 95-108 (GPSPGPSPARPPAK) are compositionally biased toward pro residues. Residues 112–123 (DEPDVDGYESDD) show a composition bias toward acidic residues. C2 domains follow at residues 126–250 (ALGT…SICL) and 266–399 (ERGR…ERWH). Residues D157, D163, D218, D220, D297, D303, D357, D359, and D365 each coordinate Ca(2+). Residues 257 to 375 (DKAEDKSLEE…FIGGVVLGIN (119 aa)) form a mediates interaction with STXBP3 region. A Phosphoserine modification is found at S411.

In terms of assembly, interacts with cytoplasmic dynein light chain DYNLT1. May interact with UNC13A; the interaction mediates targeting to the plasma membrane. Probably interacts with the SNARE (soluble N-ethylmaleimide-sensitive factor attached protein receptor) complex composed of SNAP25, STX1A and VAMP2; the interaction is calcium-dependent and competitive with SYT1. Interacts with STX4; the interaction is calcium-dependent, increased by insulin and glucose, and mediates vesicle fusion with plasma membrane in pancreatic cells and adipocytes. Interacts with STXBP3; the interaction is direct, occurs at the cell membrane and regulates glucose-stimulated insulin secretion. Requires Ca(2+) as cofactor. In terms of tissue distribution, widely expressed. Expressed in pancreatic islet cells (at protein level).

Its subcellular location is the cytoplasm. The protein localises to the cytoplasmic granule. It localises to the cell membrane. In terms of biological role, calcium sensor which positively regulates SNARE-dependent fusion of vesicles with membranes. Binds phospholipids in a calcium-dependent manner and may act at the priming stage of fusion by modifying membrane curvature to stimulate fusion. Involved in calcium-triggered exocytosis in chromaffin cells and calcium-dependent spontaneous release of neurotransmitter in absence of action potentials in neuronal cells. Involved both in glucose-stimulated insulin secretion in pancreatic cells and insulin-dependent GLUT4 transport to the plasma membrane in adipocytes. This chain is Double C2-like domain-containing protein beta (Doc2b), found in Mus musculus (Mouse).